The chain runs to 426 residues: Phytoene synthase 3, chloroplastic (426 aa).

The transit peptide at 1-52 (MMSTSRAVKSPACAARRRQWSADAPNRTATFLACRHGRRLGGGGGAPCSVRA) directs the protein to the chloroplast.

The protein belongs to the phytoene/squalene synthase family. Expressed in roots and endosperm.

The protein localises to the plastid. It is found in the chloroplast. Its subcellular location is the plastoglobule. It carries out the reaction 2 (2E,6E,10E)-geranylgeranyl diphosphate = 15-cis-phytoene + 2 diphosphate. Functionally, catalyzes the conversion of geranylgeranyl diphosphate to phytoene. Mediates the first committed step in carotenoid biosynthesis. May play a role in regulating carotenoid flux in response to abiotic stress in roots. May control flux to carotenoid precursors that are required for abiotic stress-induced abscisic acid (ABA) formation in roots. This chain is Phytoene synthase 3, chloroplastic, found in Zea mays (Maize).